We begin with the raw amino-acid sequence, 336 residues long: N-acetyl-gamma-glutamyl-phosphate reductase (336 aa).

Residue Cys-156 is part of the active site.

The protein belongs to the NAGSA dehydrogenase family. Type 1 subfamily.

The protein resides in the cytoplasm. The catalysed reaction is N-acetyl-L-glutamate 5-semialdehyde + phosphate + NADP(+) = N-acetyl-L-glutamyl 5-phosphate + NADPH + H(+). The protein operates within amino-acid biosynthesis; L-arginine biosynthesis; N(2)-acetyl-L-ornithine from L-glutamate: step 3/4. Functionally, catalyzes the NADPH-dependent reduction of N-acetyl-5-glutamyl phosphate to yield N-acetyl-L-glutamate 5-semialdehyde. The sequence is that of N-acetyl-gamma-glutamyl-phosphate reductase from Moritella abyssi.